Consider the following 241-residue polypeptide: 3-dehydroquinate dehydratase (241 aa).

3-dehydroquinate contacts are provided by residues 35-37 (ELR) and Arg-70. The Proton donor/acceptor role is filled by His-133. Residue Lys-160 is the Schiff-base intermediate with substrate of the active site. Residues Arg-202 and Gln-225 each coordinate 3-dehydroquinate.

Belongs to the type-I 3-dehydroquinase family. As to quaternary structure, homodimer.

It catalyses the reaction 3-dehydroquinate = 3-dehydroshikimate + H2O. It participates in metabolic intermediate biosynthesis; chorismate biosynthesis; chorismate from D-erythrose 4-phosphate and phosphoenolpyruvate: step 3/7. Functionally, involved in the third step of the chorismate pathway, which leads to the biosynthesis of aromatic amino acids. Catalyzes the cis-dehydration of 3-dehydroquinate (DHQ) and introduces the first double bond of the aromatic ring to yield 3-dehydroshikimate. In Staphylococcus haemolyticus (strain JCSC1435), this protein is 3-dehydroquinate dehydratase.